A 118-amino-acid chain; its full sequence is Large ribosomal subunit protein bL20 (118 aa).

Belongs to the bacterial ribosomal protein bL20 family.

Binds directly to 23S ribosomal RNA and is necessary for the in vitro assembly process of the 50S ribosomal subunit. It is not involved in the protein synthesizing functions of that subunit. The polypeptide is Large ribosomal subunit protein bL20 (Synechococcus sp. (strain JA-2-3B'a(2-13)) (Cyanobacteria bacterium Yellowstone B-Prime)).